A 146-amino-acid polypeptide reads, in one-letter code: 3-hydroxyacyl-[acyl-carrier-protein] dehydratase FabZ (146 aa).

His-47 is an active-site residue.

Belongs to the thioester dehydratase family. FabZ subfamily.

The protein localises to the cytoplasm. It catalyses the reaction a (3R)-hydroxyacyl-[ACP] = a (2E)-enoyl-[ACP] + H2O. Involved in unsaturated fatty acids biosynthesis. Catalyzes the dehydration of short chain beta-hydroxyacyl-ACPs and long chain saturated and unsaturated beta-hydroxyacyl-ACPs. This Nitrosospira multiformis (strain ATCC 25196 / NCIMB 11849 / C 71) protein is 3-hydroxyacyl-[acyl-carrier-protein] dehydratase FabZ.